The sequence spans 24 residues: Iron-regulated 31 kDa protein (24 aa).

The protein localises to the periplasm. Its function is as follows. May be involved in iron uptake. The chain is Iron-regulated 31 kDa protein from Haemophilus influenzae.